A 1199-amino-acid chain; its full sequence is Major DNA-binding protein (1199 aa).

A disordered region spans residues serine 289–phenylalanine 314. A zinc finger lies at cysteine 497–histidine 510. 2 short sequence motifs (required for filament formation) span residues phenylalanine 841–tryptophan 842 and phenylalanine 1146–phenylalanine 1148. Residues leucine 1172–isoleucine 1199 are required for nuclear localization.

This sequence belongs to the herpesviridae major DNA-binding protein family. As to quaternary structure, homooligomers. Forms double-helical filaments necessary for the formation of replication compartments within the host nucleus. Interacts with the origin-binding protein. Interacts with the helicase primase complex; this interaction stimulates primer synthesis activity of the helicase-primase complex. Interacts with the DNA polymerase. Interacts with the alkaline exonuclease; this interaction increases its nuclease processivity.

The protein resides in the host nucleus. Its function is as follows. Plays several crucial roles in viral infection. Participates in the opening of the viral DNA origin to initiate replication by interacting with the origin-binding protein. May disrupt loops, hairpins and other secondary structures present on ssDNA to reduce and eliminate pausing of viral DNA polymerase at specific sites during elongation. Promotes viral DNA recombination by performing strand-transfer, characterized by the ability to transfer a DNA strand from a linear duplex to a complementary single-stranded DNA circle. Can also catalyze the renaturation of complementary single strands. Additionally, reorganizes the host cell nucleus, leading to the formation of prereplicative sites and replication compartments. This process is driven by the protein which can form double-helical filaments in the absence of DNA. This chain is Major DNA-binding protein, found in Varicella-zoster virus (strain Oka vaccine) (HHV-3).